The chain runs to 145 residues: Transcription antitermination protein NusB (145 aa).

This sequence belongs to the NusB family.

In terms of biological role, involved in transcription antitermination. Required for transcription of ribosomal RNA (rRNA) genes. Binds specifically to the boxA antiterminator sequence of the ribosomal RNA (rrn) operons. In Acetivibrio thermocellus (strain ATCC 27405 / DSM 1237 / JCM 9322 / NBRC 103400 / NCIMB 10682 / NRRL B-4536 / VPI 7372) (Clostridium thermocellum), this protein is Transcription antitermination protein NusB.